A 140-amino-acid chain; its full sequence is uncharacterized protein (140 aa).

2 consecutive transmembrane segments (helical) span residues 63 to 83 and 119 to 139; these read LGFV…TLAT and ILLY…IFIN.

It is found in the membrane. This is an uncharacterized protein from Schizosaccharomyces pombe (strain 972 / ATCC 24843) (Fission yeast).